The primary structure comprises 265 residues: MPLPVALQTRLAKRGILKHLEPEPEEEIIAEDYDDDPVDYEATRLEGLPPSWYKVFDPSCGLPYYWNADTDLVSWLSPHDPNSVVTKSAKKLRSSNADAEEKLDRSHDKSDRGHDKSDRSHEKPDRGHDKSDRGHDKSDRDRERGYDKVDRERERDRERDRDRGYDKADREEGKERRHHRREELAPYPKSKKAVSRKDEELDPMDPSSYSDAPRGTWSTGLPKRNEAKTGADTTAAGPLFQQRPYPSPGAVLRANAEASRTKQQD.

The WW domain maps to 46 to 80; sequence EGLPPSWYKVFDPSCGLPYYWNADTDLVSWLSPHD. Position 94 is a phosphoserine (serine 94). The disordered stretch occupies residues 94–265; it reads SSNADAEEKL…AEASRTKQQD (172 aa). A compositionally biased stretch (basic and acidic residues) spans 99–175; sequence AEEKLDRSHD…DKADREEGKE (77 aa). 15 tandem repeats follow at residues 104-110, 111-117, 118-124, 125-131, 132-138, 139-140, 141-142, 143-144, 150-151, 152-153, 154-155, 156-157, 158-159, 160-161, and 162-163. The 5 X 7 AA approximate tandem repeats of D-R-[SG]-H-D-K-S stretch occupies residues 104 to 138; the sequence is DRSHDKSDRGHDKSDRSHEKPDRGHDKSDRGHDKS. The segment at 139–144 is 3 X 2 AA tandem repeats of [DE]-R; the sequence is DRDRER. A 7 X 2 AA tandem repeats of [DE]-R region spans residues 150–163; sequence DRERERDRERDRDR. The segment at 245–255 is important for interaction with TXNL4A; the sequence is YPSPGAVLRAN. Serine 247 is modified (phosphoserine).

As to quaternary structure, interacts with POU3F2/Brn-2, ATXN1, TXNL4A, HTT and AR. Interaction with ATXN1 correlates positively with the length of the polyglutamine tract. Interacts with RNA polymerase II large subunit in a phosphorylation-dependent manner. Forms a ternary complex with ATXN1 mutant and phosphorylated RNA polymerase II. Interacts (via C-terminus) with TXNL4A and CD2BP2. Interacts (via WW domain) with ATN1 and SF3B1, and may interact with additional splice factors. Interacts (via WW domain) with WBP11; Leading to reduce interaction between PQBP1 and TXNL4A. Interacts with CAPRIN1. Interacts with DDX1. Interacts with SFPQ. Interacts with KHSRP.

The protein resides in the nucleus. The protein localises to the nucleus speckle. It is found in the cytoplasmic granule. Intrinsically disordered protein that acts as a scaffold, and which is involved in different processes, such as pre-mRNA splicing, transcription regulation, innate immunity and neuron development. Interacts with splicing-related factors via the intrinsically disordered region and regulates alternative splicing of target pre-mRNA species. May suppress the ability of POU3F2 to transactivate the DRD1 gene in a POU3F2 dependent manner. Can activate transcription directly or via association with the transcription machinery. May be involved in ATXN1 mutant-induced cell death. The interaction with ATXN1 mutant reduces levels of phosphorylated RNA polymerase II large subunit. Involved in the assembly of cytoplasmic stress granule, possibly by participating in the transport of neuronal RNA granules. Also acts as an innate immune sensor of infection by retroviruses, by detecting the presence of reverse-transcribed DNA in the cytosol. Directly binds retroviral reverse-transcribed DNA in the cytosol and interacts with CGAS, leading to activate the cGAS-STING signaling pathway, triggering type-I interferon production. The polypeptide is Polyglutamine-binding protein 1 (PQBP1) (Pongo pygmaeus (Bornean orangutan)).